Here is a 198-residue protein sequence, read N- to C-terminus: MGITHEFHIFLVDENVSLKSVSLLKGDSYGCNIHLKNSECKYITFILVLEPDWSEIAEAKPIRIRLNGKKMRTQLLTKTLMSIIYKAVIYVEENALVQFYSDTDRLYTDMYPTFLIDMDKQHYHILDNGYTYTYIDSFISECDKQRYLTSDIGENGYEDSTEEEDNEEDTDGVCLYCLEEEEEEDEDEDEDEDEDEEE.

A disordered region spans residues 153–198 (GENGYEDSTEEEDNEEDTDGVCLYCLEEEEEEDEDEDEDEDEDEEE). Composition is skewed to acidic residues over residues 156–171 (GYED…EDTD) and 178–198 (LEEE…DEEE).

The protein belongs to the poxviridae C7 protein family.

Functionally, plays a role for multiplication of the virus in different cell types. This chain is Probable host range protein 2-3, found in Rabbit fibroma virus (strain Kasza) (RFV).